Consider the following 189-residue polypeptide: ATP synthase subunit b (189 aa).

Residues 35 to 54 (LLAQMFNFLVLLILLRAVAY) form a helical membrane-spanning segment.

This sequence belongs to the ATPase B chain family. In terms of assembly, F-type ATPases have 2 components, F(1) - the catalytic core - and F(0) - the membrane proton channel. F(1) has five subunits: alpha(3), beta(3), gamma(1), delta(1), epsilon(1). F(0) has three main subunits: a(1), b(2) and c(10-14). The alpha and beta chains form an alternating ring which encloses part of the gamma chain. F(1) is attached to F(0) by a central stalk formed by the gamma and epsilon chains, while a peripheral stalk is formed by the delta and b chains.

It is found in the cell membrane. Functionally, f(1)F(0) ATP synthase produces ATP from ADP in the presence of a proton or sodium gradient. F-type ATPases consist of two structural domains, F(1) containing the extramembraneous catalytic core and F(0) containing the membrane proton channel, linked together by a central stalk and a peripheral stalk. During catalysis, ATP synthesis in the catalytic domain of F(1) is coupled via a rotary mechanism of the central stalk subunits to proton translocation. In terms of biological role, component of the F(0) channel, it forms part of the peripheral stalk, linking F(1) to F(0). The chain is ATP synthase subunit b from Desulforamulus reducens (strain ATCC BAA-1160 / DSM 100696 / MI-1) (Desulfotomaculum reducens).